A 322-amino-acid polypeptide reads, in one-letter code: tRNA-dihydrouridine synthase B (322 aa).

FMN contacts are provided by residues 16 to 18 (PMA) and glutamine 70. Cysteine 100 functions as the Proton donor in the catalytic mechanism. FMN-binding positions include lysine 139, 200-202 (NGD), and 224-225 (GR).

Belongs to the Dus family. DusB subfamily. It depends on FMN as a cofactor.

The enzyme catalyses a 5,6-dihydrouridine in tRNA + NAD(+) = a uridine in tRNA + NADH + H(+). The catalysed reaction is a 5,6-dihydrouridine in tRNA + NADP(+) = a uridine in tRNA + NADPH + H(+). Its function is as follows. Catalyzes the synthesis of 5,6-dihydrouridine (D), a modified base found in the D-loop of most tRNAs, via the reduction of the C5-C6 double bond in target uridines. This is tRNA-dihydrouridine synthase B from Vibrio vulnificus (strain CMCP6).